The chain runs to 139 residues: UDP-glucose 4-epimerase (139 aa).

Residues 11–12, 31–36, 58–59, 80–84, asparagine 99, and serine 124 contribute to the NAD(+) site; these read YI, DNLCNS, DI, and FAGLK. Substrate is bound at residue serine 124. Tyrosine 136 (proton acceptor) is an active-site residue.

The protein belongs to the NAD(P)-dependent epimerase/dehydratase family. In terms of assembly, homodimer. Requires NAD(+) as cofactor.

It catalyses the reaction UDP-alpha-D-glucose = UDP-alpha-D-galactose. It functions in the pathway carbohydrate metabolism; galactose metabolism. Its function is as follows. Involved in the metabolism of galactose. Catalyzes the conversion of UDP-galactose (UDP-Gal) to UDP-glucose (UDP-Glc) through a mechanism involving the transient reduction of NAD. This is UDP-glucose 4-epimerase (galE) from Klebsiella pneumoniae.